A 591-amino-acid polypeptide reads, in one-letter code: uncharacterized protein (591 aa).

Gly residues predominate over residues methionine 1–glycine 10. Disordered regions lie at residues methionine 1–aspartate 37, arginine 110–glutamate 135, glutamate 324–proline 344, and glycine 487–leucine 517. Residues asparagine 11–asparagine 32 are compositionally biased toward polar residues. Positions arginine 110 to glycine 132 are enriched in low complexity. Basic and acidic residues predominate over residues glutamine 490–leucine 507.

The protein to C.muridarum TC_0268.

This is an uncharacterized protein from Chlamydia trachomatis serovar D (strain ATCC VR-885 / DSM 19411 / UW-3/Cx).